The sequence spans 146 residues: Hemoglobin subunit beta (146 aa).

Positions 2 to 146 (QWTAEEKQLI…VAHALARKYH (145 aa)) constitute a Globin domain. Heme b is bound by residues His63 and His92.

This sequence belongs to the globin family. In terms of assembly, heterotetramer of two alpha chains and two beta chains. Red blood cells.

Its function is as follows. Involved in oxygen transport from the lung to the various peripheral tissues. The chain is Hemoglobin subunit beta (HBB) from Rhea americana (Greater rhea).